Consider the following 468-residue polypeptide: Ribosomal protein uS12 methylthiotransferase RimO (468 aa).

Positions 16–130 constitute an MTTase N-terminal domain; it reads NKIHFISLGC…ILSAIESRES (115 aa). The [4Fe-4S] cluster site is built by Cys-25, Cys-61, Cys-93, Cys-164, Cys-168, and Cys-171. The Radical SAM core domain maps to 150–382; it reads STPKHYAYLK…SQIQKRNVDK (233 aa). In terms of domain architecture, TRAM spans 385–455; it reads QKLIGEKIEA…GYDLVGRVVK (71 aa).

The protein belongs to the methylthiotransferase family. RimO subfamily. [4Fe-4S] cluster serves as cofactor.

The protein localises to the cytoplasm. It carries out the reaction L-aspartate(89)-[ribosomal protein uS12]-hydrogen + (sulfur carrier)-SH + AH2 + 2 S-adenosyl-L-methionine = 3-methylsulfanyl-L-aspartate(89)-[ribosomal protein uS12]-hydrogen + (sulfur carrier)-H + 5'-deoxyadenosine + L-methionine + A + S-adenosyl-L-homocysteine + 2 H(+). Functionally, catalyzes the methylthiolation of an aspartic acid residue of ribosomal protein uS12. The polypeptide is Ribosomal protein uS12 methylthiotransferase RimO (Chlamydia pneumoniae (Chlamydophila pneumoniae)).